The chain runs to 412 residues: Transforming growth factor beta-2 proprotein (412 aa).

Residues 1-20 (MHCYLLSVFLTLDLAAVALS) form the signal peptide. 3 N-linked (GlcNAc...) asparagine glycosylation sites follow: N72, N139, and N240. Cystine bridges form between C307/C316, C315/C378, C344/C409, and C348/C411.

Belongs to the TGF-beta family. In terms of assembly, interacts with Transforming growth factor beta-2 (TGF-beta-2) chain; interaction is non-covalent and maintains (TGF-beta-2) in a latent state. Homodimer; disulfide-linked. Interacts with TGF-beta receptors (TGFBR1 and TGFBR2), leading to signal transduction. Post-translationally, the precursor proprotein is cleaved in the Golgi apparatus to form Transforming growth factor beta-2 (TGF-beta-2) and Latency-associated peptide (LAP) chains, which remain non-covalently linked, rendering TGF-beta-2 inactive.

It localises to the secreted. It is found in the extracellular space. The protein localises to the extracellular matrix. Its function is as follows. Precursor of the Latency-associated peptide (LAP) and Transforming growth factor beta-2 (TGF-beta-2) chains, which constitute the regulatory and active subunit of TGF-beta-2, respectively. Functionally, required to maintain the Transforming growth factor beta-2 (TGF-beta-2) chain in a latent state during storage in extracellular matrix. Associates non-covalently with TGF-beta-2 and regulates its activation via interaction with 'milieu molecules', such as LTBP1 and LRRC32/GARP, that control activation of TGF-beta-2. Multifunctional protein that regulates various processes such as angiogenesis and heart development. Activation into mature form follows different steps: following cleavage of the proprotein in the Golgi apparatus, Latency-associated peptide (LAP) and Transforming growth factor beta-2 (TGF-beta-2) chains remain non-covalently linked rendering TGF-beta-2 inactive during storage in extracellular matrix. At the same time, LAP chain interacts with 'milieu molecules', such as LTBP1 and LRRC32/GARP, that control activation of TGF-beta-2 and maintain it in a latent state during storage in extracellular milieus. Once activated following release of LAP, TGF-beta-2 acts by binding to TGF-beta receptors (TGFBR1 and TGFBR2), which transduce signal. The chain is Transforming growth factor beta-2 proprotein (TGFB2) from Gallus gallus (Chicken).